A 596-amino-acid chain; its full sequence is Elongation factor 4 (596 aa).

The region spanning 2 to 183 is the tr-type G domain; the sequence is ENIRNFSIIA…AIIKRIPAPK (182 aa). GTP contacts are provided by residues 14–19 and 130–133; these read DHGKST and NKID.

The protein belongs to the TRAFAC class translation factor GTPase superfamily. Classic translation factor GTPase family. LepA subfamily.

It is found in the cell inner membrane. The enzyme catalyses GTP + H2O = GDP + phosphate + H(+). In terms of biological role, required for accurate and efficient protein synthesis under certain stress conditions. May act as a fidelity factor of the translation reaction, by catalyzing a one-codon backward translocation of tRNAs on improperly translocated ribosomes. Back-translocation proceeds from a post-translocation (POST) complex to a pre-translocation (PRE) complex, thus giving elongation factor G a second chance to translocate the tRNAs correctly. Binds to ribosomes in a GTP-dependent manner. The chain is Elongation factor 4 from Campylobacter hominis (strain ATCC BAA-381 / DSM 21671 / CCUG 45161 / LMG 19568 / NCTC 13146 / CH001A).